Here is a 470-residue protein sequence, read N- to C-terminus: Shutoff alkaline exonuclease (470 aa).

Belongs to the herpesviridae alkaline nuclease family. In terms of assembly, forms a complex with the DNA polymerase, the DNA polymerase processivity factor, and the major DNA binding protein.

Its subcellular location is the host nucleus. The protein localises to the host cytoplasm. In terms of biological role, plays a role in processing non linear or branched viral DNA intermediates in order to promote the production of mature packaged unit-length linear progeny viral DNA molecules. Exhibits endonuclease and exonuclease activities and accepts both double-stranded and single-stranded DNA as substrate. Exonuclease digestion of DNA is in the 5'-&gt; 3' direction and the products are 5'-monophosphate nucleosides. Additionally, forms a recombinase with the major DNA-binding protein, which displays strand exchange activity. Also acts as a cytoplasmic RNA endonuclease that induces degradation of the majority of the cellular messenger RNAs during early lytic infection. The resulting inhibition of cellular protein synthesis serves to ensure maximal viral gene expression and evasion from host immune response. Internally cleaves host mRNAs which are then degraded by the cellular exonuclease XRN1. Bypasses therefore the regulatory steps of deadenylation and decapping normally required for XRN1 activation. In Epstein-Barr virus (strain GD1) (HHV-4), this protein is Shutoff alkaline exonuclease.